Here is a 1579-residue protein sequence, read N- to C-terminus: Pentafunctional AROM polypeptide (1579 aa).

Residues 1–391 (MKVELSKVPI…YGTSAHVVSD (391 aa)) are 3-dehydroquinate synthase. NAD(+) contacts are provided by residues 44–46 (DTN), 79–82 (EAHK), 110–112 (GGV), and Asp-115. Residue Arg-126 participates in 7-phospho-2-dehydro-3-deoxy-D-arabino-heptonate binding. 135–136 (TS) contacts NAD(+). 2 residues coordinate 7-phospho-2-dehydro-3-deoxy-D-arabino-heptonate: Asp-142 and Lys-148. Lys-157 is a binding site for NAD(+). Asn-158 serves as a coordination point for 7-phospho-2-dehydro-3-deoxy-D-arabino-heptonate. NAD(+) is bound by residues 175–178 (WLET) and Asn-186. Glu-190 lines the Zn(2+) pocket. 7-phospho-2-dehydro-3-deoxy-D-arabino-heptonate is bound by residues 190–193 (EVIK) and Lys-257. Residue Glu-267 is the Proton acceptor; for 3-dehydroquinate synthase activity of the active site. 7-phospho-2-dehydro-3-deoxy-D-arabino-heptonate is bound by residues 271–275 (RNLLN) and His-278. Residue His-278 coordinates Zn(2+). Catalysis depends on His-282, which acts as the Proton acceptor; for 3-dehydroquinate synthase activity. His-294 and Lys-363 together coordinate 7-phospho-2-dehydro-3-deoxy-D-arabino-heptonate. His-294 contacts Zn(2+). An EPSP synthase region spans residues 404–862 (VYPFKTLENG…WDVLHTQLGA (459 aa)). The active-site For EPSP synthase activity is Cys-844. Positions 881–1070 (SIVIIGMRAA…IPTNRSSFVC (190 aa)) are shikimate kinase. 886–893 (GMRAAGKT) is an ATP binding site. A 3-dehydroquinase region spans residues 1071-1283 (LTFDDLAAHK…SAPGQLTLSQ (213 aa)). His-1188 serves as the catalytic Proton acceptor; for 3-dehydroquinate dehydratase activity. The active-site Schiff-base intermediate with substrate; for 3-dehydroquinate dehydratase activity is the Lys-1217. Positions 1296–1579 (AKNFYVVGSP…IYSAVTEEQA (284 aa)) are shikimate dehydrogenase.

The protein in the N-terminal section; belongs to the sugar phosphate cyclases superfamily. Dehydroquinate synthase family. This sequence in the 2nd section; belongs to the EPSP synthase family. It in the 3rd section; belongs to the shikimate kinase family. In the 4th section; belongs to the type-I 3-dehydroquinase family. The protein in the C-terminal section; belongs to the shikimate dehydrogenase family. Homodimer. It depends on Zn(2+) as a cofactor.

It localises to the cytoplasm. The catalysed reaction is 7-phospho-2-dehydro-3-deoxy-D-arabino-heptonate = 3-dehydroquinate + phosphate. The enzyme catalyses 3-dehydroquinate = 3-dehydroshikimate + H2O. It catalyses the reaction shikimate + NADP(+) = 3-dehydroshikimate + NADPH + H(+). It carries out the reaction shikimate + ATP = 3-phosphoshikimate + ADP + H(+). The catalysed reaction is 3-phosphoshikimate + phosphoenolpyruvate = 5-O-(1-carboxyvinyl)-3-phosphoshikimate + phosphate. It participates in metabolic intermediate biosynthesis; chorismate biosynthesis; chorismate from D-erythrose 4-phosphate and phosphoenolpyruvate: step 2/7. The protein operates within metabolic intermediate biosynthesis; chorismate biosynthesis; chorismate from D-erythrose 4-phosphate and phosphoenolpyruvate: step 3/7. Its pathway is metabolic intermediate biosynthesis; chorismate biosynthesis; chorismate from D-erythrose 4-phosphate and phosphoenolpyruvate: step 4/7. It functions in the pathway metabolic intermediate biosynthesis; chorismate biosynthesis; chorismate from D-erythrose 4-phosphate and phosphoenolpyruvate: step 5/7. It participates in metabolic intermediate biosynthesis; chorismate biosynthesis; chorismate from D-erythrose 4-phosphate and phosphoenolpyruvate: step 6/7. Its function is as follows. The AROM polypeptide catalyzes 5 consecutive enzymatic reactions in prechorismate polyaromatic amino acid biosynthesis. The chain is Pentafunctional AROM polypeptide from Lachancea thermotolerans (strain ATCC 56472 / CBS 6340 / NRRL Y-8284) (Yeast).